The primary structure comprises 246 residues: Ubiquinone biosynthesis O-methyltransferase (246 aa).

S-adenosyl-L-methionine is bound by residues arginine 36, glycine 60, aspartate 81, and leucine 123.

Belongs to the methyltransferase superfamily. UbiG/COQ3 family.

It carries out the reaction a 3-demethylubiquinol + S-adenosyl-L-methionine = a ubiquinol + S-adenosyl-L-homocysteine + H(+). The catalysed reaction is a 3-(all-trans-polyprenyl)benzene-1,2-diol + S-adenosyl-L-methionine = a 2-methoxy-6-(all-trans-polyprenyl)phenol + S-adenosyl-L-homocysteine + H(+). It participates in cofactor biosynthesis; ubiquinone biosynthesis. In terms of biological role, O-methyltransferase that catalyzes the 2 O-methylation steps in the ubiquinone biosynthetic pathway. The polypeptide is Ubiquinone biosynthesis O-methyltransferase (Rickettsia typhi (strain ATCC VR-144 / Wilmington)).